The chain runs to 1055 residues: Bifunctional fucokinase/GDP-fucose pyrophosphorylase (1055 aa).

The interval 34-565 is GDP-fucose pyrophosphorylase; the sequence is WDAIVLTAAS…SSQRVSLEEL (532 aa). Positions 693-1055 are L-fucokinase; it reads GKSHSENHIS…VKVYNWSICI (363 aa). Residue 826 to 836 participates in ATP binding; that stretch reads PRGSGLGTSSI.

Belongs to the GHMP kinase family. The cofactor is Mn(2+). Mg(2+) serves as cofactor. As to expression, ubiquitous. Highest expression in flower buds.

The catalysed reaction is L-fucose + ATP = beta-L-fucose 1-phosphate + ADP + H(+). It carries out the reaction beta-L-fucose 1-phosphate + GTP + H(+) = GDP-beta-L-fucose + diphosphate. Bifunctional enzyme involved in the salvage pathway which converts free L-fucose to GDP-L-fucose. Catalyzes two successive reactions, the ATP-dependent phosphorylation of L-fucose to L-fucose 1-phosphate, and its guanylylation to GDP-L-fucose. The sugar-1-kinase activity has a strict substrate specificity for L-fucose and ATP. The pyrophosphorylase activity has a strict substrate specificity for L-fucose 1-phosphate and GTP. The polypeptide is Bifunctional fucokinase/GDP-fucose pyrophosphorylase (FKGP) (Arabidopsis thaliana (Mouse-ear cress)).